The following is a 702-amino-acid chain: Glucoamylase (702 aa).

The signal sequence occupies residues Met1–Gly21. Residue Cys22 is the site of N-palmitoyl cysteine attachment. The S-diacylglycerol cysteine moiety is linked to residue Cys22. Trp342 is a substrate binding site. The Proton acceptor role is filled by Glu452. Residue Glu455 is the Proton donor of the active site.

This sequence belongs to the glycosyl hydrolase 15 family.

It localises to the cell membrane. The enzyme catalyses Hydrolysis of terminal (1-&gt;4)-linked alpha-D-glucose residues successively from non-reducing ends of the chains with release of beta-D-glucose.. Functionally, CGA has typical kinetic properties for a glucoamylase, but this bacterial enzyme had higher isomaltose-hydrolyzing activity than other eukaryotic glucoamylases. The sequence is that of Glucoamylase (cga) from Clostridium sp. (strain G0005).